The following is a 496-amino-acid chain: Pseudooxynicotine dehydrogenase (496 aa).

The tat-type signal signal peptide spans 1–42 (MTKDGDEGSKSGVSRRKFLGSAAVGVATAGIASQLLTLSAPA). Positions 69, 88, 96, 113, 285, 461, and 471 each coordinate FAD.

It belongs to the flavin monoamine oxidase family. In terms of assembly, homodimer. FAD serves as cofactor. In terms of processing, predicted to be exported by the Tat system. The position of the signal peptide cleavage has not been experimentally proven.

It localises to the periplasm. It catalyses the reaction pseudooxynicotine + 2 Fe(III)-[cytochrome c] + H2O = 4-oxo-4-(pyridin-3-yl)butanal + methylamine + 2 Fe(II)-[cytochrome c] + 2 H(+). The protein operates within alkaloid degradation; nicotine degradation. Its activity is regulated as follows. Strongly inhibited by Na(2)MoO(4) and FeCl(3). Activity is nearly twice as high in the presence of Na(2)WO(4). Involved in nicotine degradation. Catalyzes the deamination of pseudooxynicotine to 3-succinoylsemialdehyde-pyridine. Functions as a dehydrogenase that uses the c-type cytochrome protein CycN as the physiological electron acceptor. O(2) is a poor electron acceptor. Pnao is oxidized by CycN 230 times faster than O(2) at equivalent oxidant concentrations. In Pseudomonas putida (strain DSM 28022 / S16), this protein is Pseudooxynicotine dehydrogenase.